The primary structure comprises 287 residues: NAD kinase (287 aa).

Aspartate 56 (proton acceptor) is an active-site residue. Residues 56–57 (DG), arginine 61, 128–129 (ND), and aspartate 156 contribute to the NAD(+) site.

The protein belongs to the NAD kinase family. Requires a divalent metal cation as cofactor.

The protein localises to the cytoplasm. It carries out the reaction NAD(+) + ATP = ADP + NADP(+) + H(+). In terms of biological role, involved in the regulation of the intracellular balance of NAD and NADP, and is a key enzyme in the biosynthesis of NADP. Catalyzes specifically the phosphorylation on 2'-hydroxyl of the adenosine moiety of NAD to yield NADP. The chain is NAD kinase from Thermomicrobium roseum (strain ATCC 27502 / DSM 5159 / P-2).